Reading from the N-terminus, the 108-residue chain is Insulin (108 aa).

Positions 1–24 (MALWTRLLPLLALLALWAPAPAQA) are cleaved as a signal peptide. 3 disulfides stabilise this stretch: C31–C94, C43–C107, and C93–C98. Residues 57–85 (EAENPQAGAVELGGGLGGLQALALEGPPQ) constitute a propeptide, c peptide.

It belongs to the insulin family. Heterodimer of a B chain and an A chain linked by two disulfide bonds.

The protein resides in the secreted. In terms of biological role, insulin decreases blood glucose concentration. It increases cell permeability to monosaccharides, amino acids and fatty acids. It accelerates glycolysis, the pentose phosphate cycle, and glycogen synthesis in liver. The protein is Insulin (INS) of Sus scrofa (Pig).